The following is a 299-amino-acid chain: Inactive recombination-promoting nuclease-like protein RpnE (299 aa).

It belongs to the Rpn/YhgA-like nuclease family.

In terms of biological role, upon expression has no effect on RecA-independent DNA recombination, cell viability or DNA damage. This chain is Inactive recombination-promoting nuclease-like protein RpnE (yfaD), found in Escherichia coli (strain K12).